Here is a 534-residue protein sequence, read N- to C-terminus: CTP synthase (534 aa).

Residues 1-267 (MTKYIFVTGG…GDLIIERLAL (267 aa)) are amidoligase domain. Ser-13 contributes to the CTP binding site. Ser-13 serves as a coordination point for UTP. 14–19 (SVGKGI) serves as a coordination point for ATP. Tyr-54 is an L-glutamine binding site. Position 71 (Asp-71) interacts with ATP. Residues Asp-71 and Glu-141 each coordinate Mg(2+). CTP-binding positions include 148–150 (DIE), 188–193 (KTKPTQ), and Lys-224. UTP is bound by residues 188 to 193 (KTKPTQ) and Lys-224. The Glutamine amidotransferase type-1 domain occupies 292 to 534 (TVAIVGKYVE…VQAALEQIAE (243 aa)). Gly-354 serves as a coordination point for L-glutamine. Cys-381 serves as the catalytic Nucleophile; for glutamine hydrolysis. Residues 382 to 385 (LGMQ), Glu-405, and Arg-462 contribute to the L-glutamine site. Active-site residues include His-507 and Glu-509.

The protein belongs to the CTP synthase family. In terms of assembly, homotetramer.

It catalyses the reaction UTP + L-glutamine + ATP + H2O = CTP + L-glutamate + ADP + phosphate + 2 H(+). The enzyme catalyses L-glutamine + H2O = L-glutamate + NH4(+). It carries out the reaction UTP + NH4(+) + ATP = CTP + ADP + phosphate + 2 H(+). The protein operates within pyrimidine metabolism; CTP biosynthesis via de novo pathway; CTP from UDP: step 2/2. With respect to regulation, allosterically activated by GTP, when glutamine is the substrate; GTP has no effect on the reaction when ammonia is the substrate. The allosteric effector GTP functions by stabilizing the protein conformation that binds the tetrahedral intermediate(s) formed during glutamine hydrolysis. Inhibited by the product CTP, via allosteric rather than competitive inhibition. Functionally, catalyzes the ATP-dependent amination of UTP to CTP with either L-glutamine or ammonia as the source of nitrogen. Regulates intracellular CTP levels through interactions with the four ribonucleotide triphosphates. This is CTP synthase from Herpetosiphon aurantiacus (strain ATCC 23779 / DSM 785 / 114-95).